The sequence spans 3767 residues: Transmembrane cell adhesion receptor mua-3 (3767 aa).

A signal peptide spans 1-24; it reads MQAGISIFFLFLHIPIFFVNCSNS. Residues 25–3417 are Extracellular-facing; sequence TSCVAREEFQ…CQVAPSNASL (3393 aa). Residues 26–63 enclose the LDL-receptor class A 1 domain; that stretch reads SCVAREEFQCKMDDSCISMKKWQDGVDDCYDGSDEVCL. 10 cysteine pairs are disulfide-bonded: cysteine 27-cysteine 41, cysteine 35-cysteine 54, cysteine 62-cysteine 76, cysteine 69-cysteine 89, cysteine 97-cysteine 110, cysteine 104-cysteine 123, cysteine 131-cysteine 144, cysteine 138-cysteine 157, cysteine 165-cysteine 179, and cysteine 172-cysteine 192. LDL-receptor class A domains follow at residues 96–132, 133–166, and 167–209; these read GCPA…EPCA, QNQF…EECT, and TSQF…ANCT. N-linked (GlcNAc...) asparagine glycosylation is found at asparagine 201 and asparagine 207. 17 consecutive EGF-like domains span residues 225 to 268, 375 to 416, 418 to 466, 468 to 517, 519 to 566, 614 to 663, 665 to 713, 714 to 760, 762 to 810, 816 to 860, 861 to 908, 910 to 961, 963 to 1012, 1029 to 1070, 1071 to 1118, 1120 to 1168, and 1170 to 1219; these read KLKF…DKCI, NRDD…GTCR, LIDE…RKCR, LINE…RNCT, AINE…RKCV, RANP…RKCV, AVDE…RSCK, KADM…RVCR, VVNE…KNCV, DPPE…GRCV, VINE…RICR, RVNE…RRCI, AVNE…RICT, TDDG…GSCR, VYSA…RICK, LINE…RQCT, and SNNE…RVCT. 51 disulfide bridges follow: cysteine 229/cysteine 243, cysteine 235/cysteine 252, cysteine 254/cysteine 267, cysteine 381/cysteine 392, cysteine 386/cysteine 402, cysteine 404/cysteine 415, cysteine 422/cysteine 435, cysteine 429/cysteine 444, cysteine 446/cysteine 465, cysteine 472/cysteine 486, cysteine 480/cysteine 495, cysteine 497/cysteine 516, cysteine 523/cysteine 536, cysteine 530/cysteine 545, cysteine 547/cysteine 565, cysteine 618/cysteine 632, cysteine 626/cysteine 642, cysteine 644/cysteine 662, cysteine 669/cysteine 682, cysteine 676/cysteine 691, cysteine 693/cysteine 712, cysteine 718/cysteine 729, cysteine 723/cysteine 738, cysteine 740/cysteine 759, cysteine 766/cysteine 779, cysteine 773/cysteine 788, cysteine 790/cysteine 809, cysteine 820/cysteine 836, cysteine 828/cysteine 845, cysteine 847/cysteine 859, cysteine 865/cysteine 879, cysteine 873/cysteine 888, cysteine 890/cysteine 907, cysteine 914/cysteine 930, cysteine 924/cysteine 939, cysteine 941/cysteine 960, cysteine 967/cysteine 981, cysteine 975/cysteine 990, cysteine 992/cysteine 1011, cysteine 1033/cysteine 1046, cysteine 1040/cysteine 1055, cysteine 1057/cysteine 1069, cysteine 1075/cysteine 1087, cysteine 1081/cysteine 1096, cysteine 1098/cysteine 1117, cysteine 1124/cysteine 1137, cysteine 1131/cysteine 1146, cysteine 1148/cysteine 1167, cysteine 1174/cysteine 1188, cysteine 1182/cysteine 1197, and cysteine 1199/cysteine 1218. A glycan (N-linked (GlcNAc...) asparagine) is linked at asparagine 383. Asparagine 515 carries N-linked (GlcNAc...) asparagine glycosylation. Residues 1230 to 1406 enclose the VWFA domain; that stretch reads DLVFLIDGSG…DLDTRLRSMI (177 aa). Asparagine 1350 is a glycosylation site (N-linked (GlcNAc...) asparagine). EGF-like domains lie at 1421–1466, 1466–1510, 1521–1562, 1563–1608, 1608–1656, 1658–1706, 1708–1755, 1759–1807, 1809–1860, 1862–1911, 1913–1961, 1963–2011, 2014–2062, 2068–2112, 2113–2160, 2162–2208, 2210–2258, 2260–2308, 2310–2358, 2360–2408, 2409–2455, 2456–2504, 2513–2563, 2565–2616, 2618–2666, 2668–2714, 2716–2763, 2763–2811, and 2833–2872; these read SEDV…RVCG, GGDL…GFCV, HDAN…GQCA, YPGS…DICL, LKNE…RVCV, LQNE…MVCK, LVNE…RRCE, TNDK…RLCI, VIPE…RLCK, LQNE…RKCK, LINE…RRCL, RINE…RICR, LVDE…RLCQ, PPPE…GSCS, IINE…RMCK, MVNE…RICK, LTNE…RACR, LVNE…RVCL, FINE…RVCV, LVDE…RVCS, APEV…RVCV, RNNA…RVCE, PRHP…RLCV, TEPV…RICK, LINE…RICS, SVNE…HRCS, MINE…RICR, RLNE…RICI, and REFP…GKCQ. Intrachain disulfides connect cysteine 1425/cysteine 1441, cysteine 1433/cysteine 1450, cysteine 1452/cysteine 1465, cysteine 1470/cysteine 1484, cysteine 1478/cysteine 1494, cysteine 1496/cysteine 1509, cysteine 1525/cysteine 1538, cysteine 1532/cysteine 1547, cysteine 1549/cysteine 1561, cysteine 1567/cysteine 1583, cysteine 1575/cysteine 1592, cysteine 1594/cysteine 1607, cysteine 1612/cysteine 1625, cysteine 1619/cysteine 1634, cysteine 1636/cysteine 1655, cysteine 1662/cysteine 1675, cysteine 1669/cysteine 1684, cysteine 1686/cysteine 1705, cysteine 1712/cysteine 1726, cysteine 1720/cysteine 1735, cysteine 1737/cysteine 1754, cysteine 1763/cysteine 1776, cysteine 1770/cysteine 1786, cysteine 1788/cysteine 1806, cysteine 1813/cysteine 1829, cysteine 1821/cysteine 1838, cysteine 1840/cysteine 1859, cysteine 1866/cysteine 1880, cysteine 1873/cysteine 1889, cysteine 1891/cysteine 1910, cysteine 1917/cysteine 1930, cysteine 1924/cysteine 1939, cysteine 1941/cysteine 1960, cysteine 1967/cysteine 1980, cysteine 1974/cysteine 1989, cysteine 1991/cysteine 2010, cysteine 2018/cysteine 2031, cysteine 2025/cysteine 2040, cysteine 2042/cysteine 2061, cysteine 2072/cysteine 2088, cysteine 2080/cysteine 2097, cysteine 2099/cysteine 2111, cysteine 2117/cysteine 2131, cysteine 2125/cysteine 2140, cysteine 2142/cysteine 2159, cysteine 2166/cysteine 2180, cysteine 2174/cysteine 2189, cysteine 2191/cysteine 2207, cysteine 2214/cysteine 2228, cysteine 2222/cysteine 2237, cysteine 2239/cysteine 2257, cysteine 2264/cysteine 2278, cysteine 2272/cysteine 2287, cysteine 2289/cysteine 2307, cysteine 2314/cysteine 2327, cysteine 2321/cysteine 2336, cysteine 2338/cysteine 2357, cysteine 2364/cysteine 2377, cysteine 2371/cysteine 2386, cysteine 2388/cysteine 2407, cysteine 2413/cysteine 2425, cysteine 2419/cysteine 2435, cysteine 2437/cysteine 2454, cysteine 2460/cysteine 2474, cysteine 2468/cysteine 2483, and cysteine 2485/cysteine 2503. The segment at 2492-2521 is disordered; it reads RSPDSSQRGRVCEPPPPPSPPPRHPCQDPE. Pro residues predominate over residues 2504-2515; sequence EPPPPPSPPPRH. Cystine bridges form between cysteine 2517-cysteine 2531, cysteine 2525-cysteine 2541, cysteine 2543-cysteine 2562, cysteine 2569-cysteine 2583, cysteine 2577-cysteine 2594, cysteine 2596-cysteine 2615, cysteine 2622-cysteine 2636, cysteine 2630-cysteine 2645, cysteine 2647-cysteine 2665, cysteine 2672-cysteine 2686, cysteine 2680-cysteine 2695, cysteine 2697-cysteine 2713, cysteine 2720-cysteine 2734, cysteine 2728-cysteine 2743, cysteine 2745-cysteine 2762, cysteine 2767-cysteine 2781, cysteine 2775-cysteine 2790, cysteine 2792-cysteine 2810, cysteine 2837-cysteine 2850, cysteine 2842-cysteine 2856, and cysteine 2858-cysteine 2871. Residues 2873–2999 enclose the SEA 1 domain; that stretch reads EVQETPFELR…GSLRVASDTD (127 aa). N-linked (GlcNAc...) asparagine glycosylation is present at asparagine 2944. In terms of domain architecture, EGF-like 47 spans 3009 to 3048; it reads EWGNCGGMSCKEHLKEVCIAGHICGCPDGMKRRDANSECR. 3 disulfides stabilise this stretch: cysteine 3013–cysteine 3026, cysteine 3018–cysteine 3032, and cysteine 3034–cysteine 3047. The SEA 2 domain maps to 3049–3174; that stretch reads VVESWNVPLW…SELYLNPTQP (126 aa). 2 N-linked (GlcNAc...) asparagine glycosylation sites follow: asparagine 3120 and asparagine 3130. EGF-like domains are found at residues 3176 to 3220, 3224 to 3272, and 3272 to 3324; these read PFNP…KKCL, GFNE…SLCV, and VLDY…TLCM. 15 cysteine pairs are disulfide-bonded: cysteine 3180–cysteine 3191, cysteine 3185–cysteine 3201, cysteine 3203–cysteine 3219, cysteine 3228–cysteine 3242, cysteine 3236–cysteine 3251, cysteine 3253–cysteine 3271, cysteine 3276–cysteine 3288, cysteine 3282–cysteine 3297, cysteine 3299–cysteine 3323, cysteine 3332–cysteine 3345, cysteine 3339–cysteine 3354, cysteine 3356–cysteine 3372, cysteine 3377–cysteine 3386, cysteine 3380–cysteine 3397, and cysteine 3399–cysteine 3408. N-linked (GlcNAc...) asparagine glycosylation is present at asparagine 3285. One can recognise an EGF-like 51; calcium-binding domain in the interval 3328–3373; it reads DVDECALGLNNCSGVAHCIDRAVGYTCKCPDGYIDGNPDEPGRVCG. The N-linked (GlcNAc...) asparagine; atypical glycan is linked to asparagine 3337. Asparagine 3338 is a glycosylation site (N-linked (GlcNAc...) asparagine). The 37-residue stretch at 3373-3409 folds into the EGF-like 52 domain; the sequence is GALLCDLCNAHGDCVHNTATNNITCVCTDGWTGPQCQ. Asparagine 3394 carries an N-linked (GlcNAc...) asparagine glycan. N-linked (GlcNAc...) asparagine glycosylation is present at asparagine 3414. A helical transmembrane segment spans residues 3418 to 3438; that stretch reads VLLILLALLFLLLTLCCLLYF. The Cytoplasmic segment spans residues 3439 to 3767; the sequence is CTKCHCFKGR…SQTSTHVTKK (329 aa). The segment at 3582-3729 is disordered; the sequence is TTTTDEQGNT…EEDVEHSVGD (148 aa). The segment covering 3588-3597 has biased composition (polar residues); sequence QGNTIVTTTE. Residues 3630–3665 show a composition bias toward low complexity; sequence QSQSQQQQSMSQGMSQSMSQHATSAGYSSSGMESSA. A compositionally biased stretch (basic and acidic residues) spans 3675–3684; the sequence is HTGERERGGS. Low complexity predominate over residues 3690–3702; that stretch reads IGRARGMAAASSG.

As to expression, expressed in the hypodermis at the sites of muscle contact, in striated muscles including body wall muscles, the anal sphincter muscles and the junctions between the anal sphincter muscle and rectal cuticle. Also expressed in non-muscle cells including the excretory duct cell and pore cells.

It is found in the cell membrane. Its subcellular location is the cell junction. The protein resides in the hemidesmosome. Involved in cell adhesion and required for organ positioning and attachment. At the hypodermal surface, required for attachment of the hypdermermis to the basal cuticle in postembryonic development, possibly through intermediate filaments of the cytoskeleton. The polypeptide is Transmembrane cell adhesion receptor mua-3 (Caenorhabditis elegans).